Here is a 468-residue protein sequence, read N- to C-terminus: SVGFKAGVKEYKLTYYTPEYETKETDILAAFRVTPQPGVPPEEAGAAVAAESSTGTWTTVWTDGLTSLDRYKGRCYHIEPVAGEEDQYIAYVAYPLDLFEEGSVTNMFTSIVGNVFGFKALRALRLEDLRIPISYVKTFQGPPHGIQVERDKLNKYGRPLLGCTIKPKLGLSAKNYGRAVYECLRGGLDFTKDDENVNSQPFMRWRDRFLFCAEAIFKSQAETGEIKGHYLNATAGTCEEMMKRAIFARELGVPIVMHDYLTGGFTANTSLAHYCRDNGLLLHIHRAMHAXIDRQKNHGIHFRVLAKALRMSGGDHIHSGTVVGKLEGERDITLGFVDLLRDDYIEKDRARGIYFTQDWVSLPGVLPVASGGIHVWHMPALTEIFGDDSVLQFGGGTLGHPWGNAPGAVANRVALEACVKXRNEGRDLATEGNEIIREATKWSPELAAACEVWKEITXNFAAVDTLDP.

At lysine 5 the chain carries N6,N6,N6-trimethyllysine. Substrate contacts are provided by asparagine 114 and threonine 164. The active-site Proton acceptor is the lysine 166. Lysine 168 contributes to the substrate binding site. 3 residues coordinate Mg(2+): lysine 192, aspartate 194, and glutamate 195. An N6-carboxylysine modification is found at lysine 192. The active-site Proton acceptor is the histidine 285. Residues arginine 286, histidine 318, and serine 370 each coordinate substrate.

The protein belongs to the RuBisCO large chain family. Type I subfamily. Heterohexadecamer of 8 large chains and 8 small chains; disulfide-linked. The disulfide link is formed within the large subunit homodimers. The cofactor is Mg(2+). The disulfide bond which can form in the large chain dimeric partners within the hexadecamer appears to be associated with oxidative stress and protein turnover.

The protein resides in the plastid. It localises to the chloroplast. It carries out the reaction 2 (2R)-3-phosphoglycerate + 2 H(+) = D-ribulose 1,5-bisphosphate + CO2 + H2O. The catalysed reaction is D-ribulose 1,5-bisphosphate + O2 = 2-phosphoglycolate + (2R)-3-phosphoglycerate + 2 H(+). RuBisCO catalyzes two reactions: the carboxylation of D-ribulose 1,5-bisphosphate, the primary event in carbon dioxide fixation, as well as the oxidative fragmentation of the pentose substrate in the photorespiration process. Both reactions occur simultaneously and in competition at the same active site. This is Ribulose bisphosphate carboxylase large chain from Anthospermum herbaceum.